The sequence spans 152 residues: Transcriptional regulator MraZ (152 aa).

2 consecutive SpoVT-AbrB domains span residues 5–52 (ASAI…PIQE) and 81–124 (AHEC…DEAA).

This sequence belongs to the MraZ family. In terms of assembly, forms oligomers.

Its subcellular location is the cytoplasm. The protein localises to the nucleoid. This Shewanella halifaxensis (strain HAW-EB4) protein is Transcriptional regulator MraZ.